A 113-amino-acid chain; its full sequence is UPF0342 protein MGAS10750_Spy0713 (113 aa).

The protein belongs to the UPF0342 family.

The protein is UPF0342 protein MGAS10750_Spy0713 of Streptococcus pyogenes serotype M4 (strain MGAS10750).